A 228-amino-acid chain; its full sequence is RING1 and YY1-binding protein (228 aa).

3 disordered regions span residues 1–21 (MTMG…PAAD), 65–156 (QVAQ…RSTA), and 172–228 (DFKE…DESF). Residues 21-50 (DEGFWDCSVCTFRNSAEAFKCSICDVRKGT) form a RanBP2-type zinc finger. Over residues 76-98 (PKKEKKEKVEKQDKEKPEKDKEI) the composition is skewed to basic and acidic residues. K77 participates in a covalent cross-link: Glycyl lysine isopeptide (Lys-Gly) (interchain with G-Cter in SUMO2). A Phosphoserine modification is found at S99. Residues 113–122 (PKSDILKDPP) show a composition bias toward basic and acidic residues. Phosphoserine occurs at positions 123, 127, and 130. A compositionally biased stretch (polar residues) spans 124–143 (EANSIQSANATTKTSETNHT). Positions 143–226 (TSRPRLKNVD…KGDMSAVNDE (84 aa)) are interaction with GABPB1 and FANK1. The segment covering 179-204 (SSSTSSSTVTSSAGSEQQNQSSSGSE) has biased composition (low complexity). S227 bears the Phosphoserine mark.

Monomer. Component of repressive BCOR complex containing Polycomb group subcomplex at least composed of BCOR, PCGF1, RING1 and RNF2/RING2. Component of PCR1-like complexes. Interacts with PCGF1. Part of a PCR1-like complex that contains AUTS2, PCGF5, RNF2, CSNK2B and RYBP. Interacts with RNF2; the interaction is direct. Interacts with CBX2, YAF2, RING1 and RNF2. Interacts with ubiquitin and ubiquitinated proteins. Interacts with ubiquitinated histone H2A. Interacts with apoptin, DEDD, FADD, CASP8, CASP10, YY1 and GABPB1. Together with GABPB1 and YY1, it forms a ternary complex, probably being the bridge factor between these two transcription factors. Interacts with MDM2, and thereby inhibits ubiquitination of TP53. Identified in a ternary complex containing MDM2, TP53 and RYBP. Interacts with FANK1; may prevent the ubiquitin-mediated proteasomal degradation of FANK1. Interacts with IFT57. Monoubiquitinated. In terms of tissue distribution, down-regulated in breast cancer tissues and in several breast cancer cell lines (at protein level). Widely expressed with highest levels in lymphoid tissues and placenta.

The protein localises to the nucleus. Its subcellular location is the cytoplasm. The protein resides in the nucleoplasm. Component of a Polycomb group (PcG) multiprotein PRC1-like complex, a complex class required to maintain the transcriptionally repressive state of many genes, including Hox genes, throughout development. PcG PRC1-like complex acts via chromatin remodeling and modification of histones; it mediates monoubiquitination of histone H2A 'Lys-119', rendering chromatin heritably changed in its expressibility. Component of a PRC1-like complex that mediates monoubiquitination of histone H2A 'Lys-119' on the X chromosome and is required for normal silencing of one copy of the X chromosome in XX females. May stimulate ubiquitination of histone H2A 'Lys-119' by recruiting the complex to target sites. Inhibits ubiquitination and subsequent degradation of TP53, and thereby plays a role in regulating transcription of TP53 target genes. May also regulate the ubiquitin-mediated proteasomal degradation of other proteins like FANK1 to regulate apoptosis. May be implicated in the regulation of the transcription as a repressor of the transcriptional activity of E4TF1. May bind to DNA. May play a role in the repression of tumor growth and metastasis in breast cancer by down-regulating SRRM3. The sequence is that of RING1 and YY1-binding protein (RYBP) from Homo sapiens (Human).